Reading from the N-terminus, the 220-residue chain is NADH-quinone oxidoreductase subunit I (220 aa).

4Fe-4S ferredoxin-type domains follow at residues 71-102 (LQRL…IITH) and 112-141 (DSYT…MGNR). C82, C85, C88, C92, C121, C124, C127, and C131 together coordinate [4Fe-4S] cluster. The tract at residues 187-220 (MQATPLDYVQEPSKEESQEETPTNPESNKGDENV) is disordered.

The protein belongs to the complex I 23 kDa subunit family. NDH-1 is composed of 14 different subunits. Subunits NuoA, H, J, K, L, M, N constitute the membrane sector of the complex. [4Fe-4S] cluster serves as cofactor.

The protein resides in the cell inner membrane. It carries out the reaction a quinone + NADH + 5 H(+)(in) = a quinol + NAD(+) + 4 H(+)(out). Functionally, NDH-1 shuttles electrons from NADH, via FMN and iron-sulfur (Fe-S) centers, to quinones in the respiratory chain. The immediate electron acceptor for the enzyme in this species is believed to be ubiquinone. Couples the redox reaction to proton translocation (for every two electrons transferred, four hydrogen ions are translocated across the cytoplasmic membrane), and thus conserves the redox energy in a proton gradient. The protein is NADH-quinone oxidoreductase subunit I of Helicobacter pylori (strain ATCC 700392 / 26695) (Campylobacter pylori).